We begin with the raw amino-acid sequence, 378 residues long: Forkhead box protein F1 (378 aa).

The tract at residues 1–45 is disordered; the sequence is MSAPDKQQPPHGGGTGGGGGAGGQAMDPAAAGPTKAKKTNAGVRR. Residues 11–23 show a composition bias toward gly residues; sequence HGGGTGGGGGAGG. Low complexity predominate over residues 24 to 42; it reads QAMDPAAAGPTKAKKTNAG. Positions 47 to 138 form a DNA-binding region, fork-head; it reads EKPPYSYIAL…EFMFEEGSFR (92 aa).

In terms of tissue distribution, expressed primarily in lung in alveolar type II pneumocyte cells, and to a lesser extent in placenta, stomach, intestine and colon.

The protein localises to the nucleus. Probable transcription activator for a number of lung-specific genes. This is Forkhead box protein F1 (Foxf1) from Mus musculus (Mouse).